The chain runs to 100 residues: Large ribosomal subunit protein uL23 (100 aa).

Belongs to the universal ribosomal protein uL23 family. As to quaternary structure, part of the 50S ribosomal subunit. Contacts protein L29, and trigger factor when it is bound to the ribosome.

One of the early assembly proteins it binds 23S rRNA. One of the proteins that surrounds the polypeptide exit tunnel on the outside of the ribosome. Forms the main docking site for trigger factor binding to the ribosome. The polypeptide is Large ribosomal subunit protein uL23 (Mycobacteroides abscessus (strain ATCC 19977 / DSM 44196 / CCUG 20993 / CIP 104536 / JCM 13569 / NCTC 13031 / TMC 1543 / L948) (Mycobacterium abscessus)).